Here is a 904-residue protein sequence, read N- to C-terminus: MSSSRVRPQAPQSPAASASASPPPHEGIEMEKMHHEEVGLGVPDETPSSPPTSSSRQAWSRDNPGFEPEEGMMEADWPPESQGRRSVSTTSSSSSGGVPGNFSGISARINRGLYPTPPAQEHRSCGKRILEKMRVLWDTRLLGESNSNREMYLKTVLREMITYILFLLTLCIITYGMVSTNMYYYTKVMSQLFLDTPLSSGEPTNFKSLSTMEDFWKFTEGPFLNGMYWELWYNNKSLPENQSLIYYENLLLGVPRLRQLRVRNESCSVHEDLRDEVYDCYNVYSPANEDKAPFGPKNGTAWRFKDESSLGESSYWGQVSTYGGGGYYQDLSRTREKSANQLQELKNNLWLDRGTRAVFLDFSIYNGNVNLFCIVRLLVEFPATGGAVPSWQFQTVRLLRYVSSWDYFVGMCEVSFCLFVLYYLVEEALEIRLHRLRYFKSLWNCLDVLIVALSVPAIIMNICRTSAVSHRLHFLLENHSTYPNFEPLARLQVHFNNLAAIIVFLSWVKLFKFINFNKTMNQLSTTMSRCAKDLMGFAIMFFIVFLAYAQLAYLVFGTQVNDFSTFQACIFTQFRIILGDFDFSEIEEADSVLGPIYFTTFVFFIFMILLNMFLAIINDTYSEVKADMAQQRSEMEITDLIKKSYNRAMVKLKLKKSSINDIPDSLQQAAGKLSFDELRQDLRGKGHSDAEIEAIFAKYDLDGDQELTEHEHQQMRDDLEKEREDLDLEHSSLPRPASGRSFSRSQDDSEEDDDEDSGHSSRRRGSSSGGVSYEEFQVLVRRVDRMEHSIGSIVSKIDAVIVKLEAMERAKMKRRDVLGRILDGVMEDERMGRDPELQREQMDRLVRDELERWESDDTMSQVSHHHHQATPIISSAQLRPRSSRPPSSLSNEGPDAAASGPAHL.

A disordered region spans residues 1 to 102 (MSSSRVRPQA…SSSGGVPGNF (102 aa)). The Cytoplasmic portion of the chain corresponds to 1–155 (MSSSRVRPQA…NSNREMYLKT (155 aa)). The segment covering 8–20 (PQAPQSPAASASA) has biased composition (low complexity). The segment covering 26–38 (EGIEMEKMHHEEV) has biased composition (basic and acidic residues). Low complexity predominate over residues 86-96 (SVSTTSSSSSG). The helical transmembrane segment at 156–177 (VLREMITYILFLLTLCIITYGM) threads the bilayer. At 178–404 (VSTNMYYYTK…TVRLLRYVSS (227 aa)) the chain is on the extracellular side. Asn235, Asn241, and Asn264 each carry an N-linked (GlcNAc...) asparagine glycan. The cysteines at positions 267 and 280 are disulfide-linked. A glycan (N-linked (GlcNAc...) asparagine) is linked at Asn298. A helical transmembrane segment spans residues 405–425 (WDYFVGMCEVSFCLFVLYYLV). Over 426–441 (EEALEIRLHRLRYFKS) the chain is Cytoplasmic. A helical membrane pass occupies residues 442 to 462 (LWNCLDVLIVALSVPAIIMNI). The Extracellular segment spans residues 463-489 (CRTSAVSHRLHFLLENHSTYPNFEPLA). Asn478 is a glycosylation site (N-linked (GlcNAc...) asparagine). Residues 490-510 (RLQVHFNNLAAIIVFLSWVKL) traverse the membrane as a helical segment. Residues 511–534 (FKFINFNKTMNQLSTTMSRCAKDL) are Cytoplasmic-facing. Residues 535-556 (MGFAIMFFIVFLAYAQLAYLVF) traverse the membrane as a helical segment. The Extracellular segment spans residues 557 to 568 (GTQVNDFSTFQA). The segment at residues 569–583 (CIFTQFRIILGDFDF) is an intramembrane region (pore-forming). Leu578 serves as a coordination point for Ca(2+). Residues 578 to 580 (LGD) carry the Selectivity filter motif. Residues 584–591 (SEIEEADS) lie on the Extracellular side of the membrane. The helical transmembrane segment at 592–612 (VLGPIYFTTFVFFIFMILLNM) threads the bilayer. Over 613 to 904 (FLAIINDTYS…DAAASGPAHL (292 aa)) the chain is Cytoplasmic. Residues 687 to 722 (HSDAEIEAIFAKYDLDGDQELTEHEHQQMRDDLEKE) form the EF-hand 1 domain. Residues Asp700, Asp702, Asp704, Glu706, and Glu711 each coordinate Ca(2+). Residues 708–732 (TEHEHQQMRDDLEKEREDLDLEHSS) show a composition bias toward basic and acidic residues. Disordered stretches follow at residues 708 to 770 (TEHE…SSGG) and 854 to 904 (ESDD…PAHL). The linker stretch occupies residues 740-759 (RSFSRSQDDSEEDDDEDSGH). The EF-hand 2 domain maps to 768–786 (SGGVSYEEFQVLVRRVDRM). The stretch at 770–809 (GVSYEEFQVLVRRVDRMEHSIGSIVSKIDAVIVKLEAMER) forms a coiled coil. Residues 878–890 (LRPRSSRPPSSLS) are compositionally biased toward low complexity.

This sequence belongs to the polycystin family. Homotetramer. Component of the heterotetrameric polycystin channel complex with pkd1; the tetramer contains one pkd1 chain and three pkd2 chains. Interacts with pkd1l1. Phosphorylated. Phosphorylation is important for protein function; a mutant human construct that lacks the N-terminal phosphorylation sites cannot complement a zebrafish pkd2-deficient mutant. In terms of processing, N-glycosylated. The four subunits in a tetramer probably differ in the extent of glycosylation; simultaneous glycosylation of all experimentally validated sites would probably create steric hindrance. Post-translationally, sumoylated by SUMO1; sumoylation regulates PKD2 membrane recycling. Detected along cilia and at the cilium basal body in Kupffer's vesicle at the 10 somite stage. Detected in heart at 48hpf. Detected in muscle and pronephric kidney at 48 hpf. Detected on trunk muscle sarcolemma and sarcomere, on ependymal cell cilia in brain, at the apical cell membrane in epithelial cells in the ear, at the lateral line organ and olfactory placode at 56 hpf. Detected in adult kidney (at protein level).

The protein localises to the basolateral cell membrane. It localises to the cell membrane. Its subcellular location is the sarcolemma. It is found in the cytoplasm. The protein resides in the myofibril. The protein localises to the sarcomere. It localises to the sarcoplasmic reticulum membrane. Its subcellular location is the apical cell membrane. It is found in the endoplasmic reticulum membrane. The protein resides in the cell projection. The protein localises to the cilium. It localises to the cytoskeleton. Its subcellular location is the cilium basal body. It is found in the cytoplasmic vesicle membrane. The catalysed reaction is K(+)(in) = K(+)(out). It carries out the reaction Na(+)(in) = Na(+)(out). The enzyme catalyses Ca(2+)(in) = Ca(2+)(out). With respect to regulation, channel activity is regulated by phosphorylation. Channel activity is regulated by intracellular Ca(2+). Functionally, forms a nonselective cation channel. Can function as a homotetrameric ion channel or can form heteromer with PKD1. Displays distinct function depending on its subcellular localization and regulation by its binding partners. In the primary cilium functions as a cation channel, with a preference for monovalent cations over divalent cations that allows K(+), Na(+) and Ca(2+) influx, with low selectivity for Ca(2+). In the endoplasmic reticulum, likely functions as a K(+) channel to facilitate Ca(2+) release. Required for normal oscillation of Ca(2+) levels within cilia; these oscillations of the intraciliary Ca(2+) levels can trigger cytoplasmic Ca(2+) signaling cascades. Required for normal temporal variation of the intracellular Ca(2+) levels in the heart. Plays a role in fluid-flow mechanosensation. Required for normal specification of the body left-right axis during embryogenesis, most likely via its role in ciliary Ca(2+) oscillations in Kupffer's vesicle. In Danio rerio (Zebrafish), this protein is Polycystin-2.